The sequence spans 289 residues: MKLSFTKMHGAGNDFVVLDGYSRALPPLTDALVRALADRHFGIGADQLLLVEKPTVDGADFKYRIFNCDGGEVEHCGNGARCFVKFVRDHGLTDKASVRVEVKHGVITLTMQDNGEVVVDMGAPVFEPARVPFDTSGLDGRREGADTLWPLPVNGATRWISVVSMGNPHAVQIVDDAEAFPVLADGPAIERDPRFPQRVNAGFMQIVSRHEVKLRVYERGAGETLACGTGACAAVAAGIRRGQLDSPVTVHTHGGTLTISWDGARDERAPLMMAGPATTVFEGVIDLPA.

Substrate is bound by residues Asn-13, Gln-47, and Asn-67. Cys-76 functions as the Proton donor in the catalytic mechanism. Substrate is bound by residues 77-78, Asn-167, Asn-200, and 218-219; these read GN and ER. Cys-227 acts as the Proton acceptor in catalysis. 228–229 contacts substrate; the sequence is GT.

It belongs to the diaminopimelate epimerase family. As to quaternary structure, homodimer.

It localises to the cytoplasm. It catalyses the reaction (2S,6S)-2,6-diaminopimelate = meso-2,6-diaminopimelate. It functions in the pathway amino-acid biosynthesis; L-lysine biosynthesis via DAP pathway; DL-2,6-diaminopimelate from LL-2,6-diaminopimelate: step 1/1. Its function is as follows. Catalyzes the stereoinversion of LL-2,6-diaminopimelate (L,L-DAP) to meso-diaminopimelate (meso-DAP), a precursor of L-lysine and an essential component of the bacterial peptidoglycan. The chain is Diaminopimelate epimerase from Burkholderia thailandensis (strain ATCC 700388 / DSM 13276 / CCUG 48851 / CIP 106301 / E264).